The chain runs to 424 residues: Magnesium-chelatase subunit ChlI-1, chloroplastic (424 aa).

Residues 1 to 60 (MASLLGTSSSAIWASPSLSSPSSKPSSSPICFRPGKLFGSKLNAGIQIRPKKNRSRYHVS) constitute a chloroplast transit peptide. Residue V61 is modified to N-acetylvaline. Intrachain disulfides connect C102–C193 and C354–C396. Position 119–126 (119–126 (GDRGTGKS)) interacts with ATP. S355 carries the phosphoserine modification.

It belongs to the Mg-chelatase subunits D/I family. The magnesium chelatase complex is a heterotrimer consisting of subunits CHLI, CHLD and CHLH. Interacts with CHLH and CHLD.

The protein resides in the plastid. Its subcellular location is the chloroplast. It carries out the reaction protoporphyrin IX + Mg(2+) + ATP + H2O = Mg-protoporphyrin IX + ADP + phosphate + 3 H(+). Its pathway is porphyrin-containing compound metabolism; chlorophyll biosynthesis. With respect to regulation, redox regulation; active in reducing conditions, inactive in oxidizing conditions. Thioredoxins f and m mediate the reversible reductive activation of oxidized CHLI1. Its function is as follows. Involved in chlorophyll biosynthesis. Catalyzes the insertion of magnesium ion into protoporphyrin IX to yield Mg-protoporphyrin IX. The magnesium-chelatase is a complex of three subunits, CHLI, CHLD and CHLH. The reaction takes place in two steps, with an ATP-dependent activation followed by an ATP-dependent chelation step. Possesses high affinity for ATP and may play a major role in chlorophyll biosynthesis. Does not bind abscisic acid (ABA), but is a positive regulator of ABA signaling. May be involved in ABA signaling in the control of stomatal aperture, but does not seem to have an effect on ABA-induced gene expression. The sequence is that of Magnesium-chelatase subunit ChlI-1, chloroplastic (CHLI1) from Arabidopsis thaliana (Mouse-ear cress).